The following is a 135-amino-acid chain: ATP synthase epsilon chain (135 aa).

This sequence belongs to the ATPase epsilon chain family. As to quaternary structure, F-type ATPases have 2 components, CF(1) - the catalytic core - and CF(0) - the membrane proton channel. CF(1) has five subunits: alpha(3), beta(3), gamma(1), delta(1), epsilon(1). CF(0) has three main subunits: a, b and c.

The protein resides in the cell inner membrane. Functionally, produces ATP from ADP in the presence of a proton gradient across the membrane. In Brucella anthropi (strain ATCC 49188 / DSM 6882 / CCUG 24695 / JCM 21032 / LMG 3331 / NBRC 15819 / NCTC 12168 / Alc 37) (Ochrobactrum anthropi), this protein is ATP synthase epsilon chain.